The primary structure comprises 87 residues: Lipid-anchored plasma membrane protein uvi15 (87 aa).

Residues 1–64 (MSAQQFYGDK…MYVQQPQASD (64 aa)) are disordered. A compositionally biased stretch (low complexity) spans 18–41 (QQAYGGPNYYPPQQNYPQQGYAPP).

Belongs to the CYSTM1 family. In terms of processing, palmitoylated.

It localises to the cell membrane. Its subcellular location is the cell tip. In terms of biological role, required for the maintenance of viability of cells in stationary phase and in starvation conditions. In Schizosaccharomyces pombe (strain 972 / ATCC 24843) (Fission yeast), this protein is Lipid-anchored plasma membrane protein uvi15 (uvi15).